The primary structure comprises 360 residues: Membrane-bound lytic murein transglycosylase C (360 aa).

Positions 1-16 (MKKLLALAVIAPLLIS) are cleaved as a signal peptide. Cys-17 carries the N-palmitoyl cysteine lipid modification. Cys-17 carries S-diacylglycerol cysteine lipidation.

It belongs to the transglycosylase Slt family.

The protein resides in the cell outer membrane. It catalyses the reaction Exolytic cleavage of the (1-&gt;4)-beta-glycosidic linkage between N-acetylmuramic acid (MurNAc) and N-acetylglucosamine (GlcNAc) residues in peptidoglycan, from either the reducing or the non-reducing ends of the peptidoglycan chains, with concomitant formation of a 1,6-anhydrobond in the MurNAc residue.. Functionally, murein-degrading enzyme. May play a role in recycling of muropeptides during cell elongation and/or cell division. The polypeptide is Membrane-bound lytic murein transglycosylase C (Salmonella arizonae (strain ATCC BAA-731 / CDC346-86 / RSK2980)).